The sequence spans 329 residues: MQFIDQARITVRAGRGGDGIMAFRREKYVPAGGPSGGDGGEGGNVVLEADGNLQTLLDFKYNRLFPAPDGRRGGPNRCTGASGKDLIIKVPCGTEVRHLSTGILLGDLTRSDDLLVVAFGGRGGLGNAHYLSNRNRAPEKFTEGRDGEEWFLQLELKLLAEVGIIGLPNAGKSTLISVLSAARPKIADYPFTTLVPNLGVVRRPSGDGTVFADIPGLIAGAAQGAGLGHDFLRHIERTRLLIHVLDGGAEDPVEDLLVVEKELVAYGHDLVERPRLLVLNKQELLDEQHQDQLVDALQAASGRRLILISAAMGLGLEGLLAQVWKELGV.

The 159-residue stretch at 1-159 (MQFIDQARIT…WFLQLELKLL (159 aa)) folds into the Obg domain. The OBG-type G domain maps to 160 to 328 (AEVGIIGLPN…LLAQVWKELG (169 aa)). ATP contacts are provided by residues 166-173 (GLPNAGKS), 191-195 (FTTLV), 213-216 (DIPG), 280-283 (NKQE), and 309-311 (SAA). Residues Ser-173 and Thr-193 each contribute to the Mg(2+) site.

The protein belongs to the TRAFAC class OBG-HflX-like GTPase superfamily. OBG GTPase family. As to quaternary structure, monomer. The cofactor is Mg(2+).

The protein localises to the cytoplasm. An essential GTPase which binds GTP, GDP and possibly (p)ppGpp with moderate affinity, with high nucleotide exchange rates and a fairly low GTP hydrolysis rate. Plays a role in control of the cell cycle, stress response, ribosome biogenesis and in those bacteria that undergo differentiation, in morphogenesis control. This is GTPase Obg from Prochlorococcus marinus (strain MIT 9303).